The primary structure comprises 509 residues: ATP synthase subunit alpha (509 aa).

ATP is bound at residue 169–176 (GDRQTGKT).

Belongs to the ATPase alpha/beta chains family. In terms of assembly, F-type ATPases have 2 components, CF(1) - the catalytic core - and CF(0) - the membrane proton channel. CF(1) has five subunits: alpha(3), beta(3), gamma(1), delta(1), epsilon(1). CF(0) has three main subunits: a(1), b(2) and c(9-12). The alpha and beta chains form an alternating ring which encloses part of the gamma chain. CF(1) is attached to CF(0) by a central stalk formed by the gamma and epsilon chains, while a peripheral stalk is formed by the delta and b chains.

Its subcellular location is the cell inner membrane. The enzyme catalyses ATP + H2O + 4 H(+)(in) = ADP + phosphate + 5 H(+)(out). Produces ATP from ADP in the presence of a proton gradient across the membrane. The alpha chain is a regulatory subunit. This is ATP synthase subunit alpha from Methylorubrum populi (strain ATCC BAA-705 / NCIMB 13946 / BJ001) (Methylobacterium populi).